We begin with the raw amino-acid sequence, 342 residues long: MTNILSPEKIENDQELPIRPSYLQEFVGQQQIKENLSVFIKAAKSRNEHLDHTLFYGPPGLGKTTLAKIISNEIGGNFKSTSGPAILKAADLAAILTNLEKNDVLFIDEIHRLNTAVEEVLYPAMEDFELDIIIGEGPAARSVKITLPKFTLIGATTRLGLLSNPLRDRFGIPMRLNFYNTEELKKVLNRASKLFDIDLTDSGSEEIAKRSRGTPRIALRLLRRIRDFAAVDGKSRVDKEISDFGLNRLEVDHIGLDSNDYRYLKFIADNYNGGPVGIETIAAALSEQRDALEETIEPYLIQIGLLQRTPRGRVITIAAFEHLKMPIPNQSHHQFNIFNENE.

A large ATPase domain (RuvB-L) region spans residues 1 to 179 (MTNILSPEKI…FGIPMRLNFY (179 aa)). ATP-binding positions include isoleucine 18, arginine 19, glycine 60, lysine 63, threonine 64, threonine 65, 126 to 128 (EDF), arginine 169, tyrosine 179, and arginine 216. Threonine 64 is a Mg(2+) binding site. A small ATPAse domain (RuvB-S) region spans residues 180 to 250 (NTEELKKVLN…ISDFGLNRLE (71 aa)). Residues 253-342 (HIGLDSNDYR…HQFNIFNENE (90 aa)) form a head domain (RuvB-H) region. DNA contacts are provided by arginine 289, arginine 308, and arginine 313.

The protein belongs to the RuvB family. As to quaternary structure, homohexamer. Forms an RuvA(8)-RuvB(12)-Holliday junction (HJ) complex. HJ DNA is sandwiched between 2 RuvA tetramers; dsDNA enters through RuvA and exits via RuvB. An RuvB hexamer assembles on each DNA strand where it exits the tetramer. Each RuvB hexamer is contacted by two RuvA subunits (via domain III) on 2 adjacent RuvB subunits; this complex drives branch migration. In the full resolvosome a probable DNA-RuvA(4)-RuvB(12)-RuvC(2) complex forms which resolves the HJ.

The protein localises to the cytoplasm. The enzyme catalyses ATP + H2O = ADP + phosphate + H(+). In terms of biological role, the RuvA-RuvB-RuvC complex processes Holliday junction (HJ) DNA during genetic recombination and DNA repair, while the RuvA-RuvB complex plays an important role in the rescue of blocked DNA replication forks via replication fork reversal (RFR). RuvA specifically binds to HJ cruciform DNA, conferring on it an open structure. The RuvB hexamer acts as an ATP-dependent pump, pulling dsDNA into and through the RuvAB complex. RuvB forms 2 homohexamers on either side of HJ DNA bound by 1 or 2 RuvA tetramers; 4 subunits per hexamer contact DNA at a time. Coordinated motions by a converter formed by DNA-disengaged RuvB subunits stimulates ATP hydrolysis and nucleotide exchange. Immobilization of the converter enables RuvB to convert the ATP-contained energy into a lever motion, pulling 2 nucleotides of DNA out of the RuvA tetramer per ATP hydrolyzed, thus driving DNA branch migration. The RuvB motors rotate together with the DNA substrate, which together with the progressing nucleotide cycle form the mechanistic basis for DNA recombination by continuous HJ branch migration. Branch migration allows RuvC to scan DNA until it finds its consensus sequence, where it cleaves and resolves cruciform DNA. This Rickettsia felis (strain ATCC VR-1525 / URRWXCal2) (Rickettsia azadi) protein is Holliday junction branch migration complex subunit RuvB.